Consider the following 420-residue polypeptide: 4-hydroxy-3-methylbut-2-en-1-yl diphosphate synthase (flavodoxin) (420 aa).

[4Fe-4S] cluster-binding residues include Cys307, Cys310, Cys353, and Glu360.

The protein belongs to the IspG family. The cofactor is [4Fe-4S] cluster.

The catalysed reaction is (2E)-4-hydroxy-3-methylbut-2-enyl diphosphate + oxidized [flavodoxin] + H2O + 2 H(+) = 2-C-methyl-D-erythritol 2,4-cyclic diphosphate + reduced [flavodoxin]. It participates in isoprenoid biosynthesis; isopentenyl diphosphate biosynthesis via DXP pathway; isopentenyl diphosphate from 1-deoxy-D-xylulose 5-phosphate: step 5/6. Its function is as follows. Converts 2C-methyl-D-erythritol 2,4-cyclodiphosphate (ME-2,4cPP) into 1-hydroxy-2-methyl-2-(E)-butenyl 4-diphosphate. The polypeptide is 4-hydroxy-3-methylbut-2-en-1-yl diphosphate synthase (flavodoxin) (Brucella suis (strain ATCC 23445 / NCTC 10510)).